The following is a 101-amino-acid chain: MKKRLTESQFQEAIQGLEVGQQTIEIARGVLVDGKPQATFATSLGLTRGAVSQAVHRVWAAFEDKNLPEGYARVTAVLPEHQAYIVRKWEADAKKKQETKR.

Residues 37–56 (QATFATSLGLTRGAVSQAVH) constitute a DNA-binding region (H-T-H motif).

In terms of biological role, in conjunction with KorB, inhibits the transcription of kilA, trfA and korAB operons. In conjunction with KorC is responsible for the negative control of kilC and kilE operons. In Escherichia coli, this protein is TrfB transcriptional repressor protein (trfB).